The sequence spans 195 residues: Interferon omega-2 (195 aa).

The signal sequence occupies residues 1–23 (MALLPSLLTALVVYELWPCGALG). Disulfide bonds link Cys24–Cys122 and Cys52–Cys162. An N-linked (GlcNAc...) asparagine glycan is attached at Asn101.

It belongs to the alpha/beta interferon family.

Its subcellular location is the secreted. The chain is Interferon omega-2 from Equus caballus (Horse).